The chain runs to 542 residues: Chondroitin sulfate N-acetylgalactosaminyltransferase 2 (542 aa).

The Cytoplasmic segment spans residues 1–13; the sequence is MSRRGSILHSRTQ. The chain crosses the membrane as a helical; Signal-anchor for type II membrane protein span at residues 14 to 34; it reads WLLLGLALLFSLVLFMYLLEC. Residues 35 to 542 lie on the Lumenal side of the membrane; it reads APQTDGNASL…AYRTNSETAG (508 aa). N41 is a glycosylation site (N-linked (GlcNAc...) asparagine). A coiled-coil region spans residues 59–105; the sequence is ALLQEQEEHYQTRATSLKRQIAQLKQELQDMSEKMRALQERKKLGAN. A glycan (N-linked (GlcNAc...) asparagine) is linked at N333. Residues D369 and H486 each contribute to the a divalent metal cation site.

It belongs to the chondroitin N-acetylgalactosaminyltransferase family.

It is found in the golgi apparatus. The protein resides in the golgi stack membrane. It catalyses the reaction 3-O-(beta-D-GlcA-(1-&gt;3)-beta-D-Gal-(1-&gt;3)-beta-D-Gal-(1-&gt;4)-beta-D-Xyl)-L-seryl-[protein] + UDP-N-acetyl-alpha-D-galactosamine = 3-O-(beta-D-GalNAc-(1-&gt;4)-beta-D-GlcA-(1-&gt;3)-beta-D-Gal-(1-&gt;3)-beta-D-Gal-(1-&gt;4)-beta-D-Xyl)-L-seryl-[protein] + UDP + H(+). Transfers 1,4-N-acetylgalactosamine (GalNAc) from UDP-GalNAc to the non-reducing end of glucuronic acid (GlcUA). Required for addition of the first GalNAc to the core tetrasaccharide linker and for elongation of chondroitin chains. This chain is Chondroitin sulfate N-acetylgalactosaminyltransferase 2 (Csgalnact2), found in Mus musculus (Mouse).